Consider the following 294-residue polypeptide: Nucleophosmin (294 aa).

Residues 121–133 (LEEEPESEDEEED) are compositionally biased toward acidic residues. Residues 121–244 (LEEEPESEDE…PKTPKVPLSL (124 aa)) form a disordered region. The Nuclear localization signal signature appears at 153–158 (PQKKPK). Residues 161 to 186 (EDDEDDDEDEDDDEDDEDDLDDDEEE) are compositionally biased toward acidic residues. The Nuclear localization signal motif lies at 190-196 (PMKKPAR). Basic and acidic residues predominate over residues 223 to 233 (KTPDSKKDKSL).

It belongs to the nucleoplasmin family. In terms of assembly, decamer formed by two pentameric rings associated in a head-to-head fashion. Post-translationally, phosphorylated.

The protein localises to the cytoplasm. It is found in the nucleus. It localises to the nucleoplasm. The protein resides in the nucleolus. In terms of biological role, acts as a chaperonin for the core histones H3, H2B and H4. Associated with nucleolar ribonucleoprotein structures and bind single-stranded nucleic acids. It may function in the assembly and/or transport of ribosome. May stimulate endonuclease activity on apurinic/apyrimidinic (AP) double-stranded DNA. May inhibit endonuclease activity on AP single-stranded RNA. The chain is Nucleophosmin (NPM1) from Gallus gallus (Chicken).